The chain runs to 309 residues: Probable MRF1 mitochondrial N(5)-glutamine methyltransferase mtq1 (309 aa).

Residues 124–128 (CTGSG), D148, and N200 contribute to the S-adenosyl-L-methionine site. 200 to 203 (NPPY) contributes to the substrate binding site.

Belongs to the protein N5-glutamine methyltransferase family.

Its subcellular location is the mitochondrion. The catalysed reaction is L-glutaminyl-[peptide chain release factor] + S-adenosyl-L-methionine = N(5)-methyl-L-glutaminyl-[peptide chain release factor] + S-adenosyl-L-homocysteine + H(+). Functionally, methylates MRF1 on 'Gln-270' using S-adenosyl L-methionine as methyl donor. This Schizosaccharomyces pombe (strain 972 / ATCC 24843) (Fission yeast) protein is Probable MRF1 mitochondrial N(5)-glutamine methyltransferase mtq1 (mtq1).